Here is a 400-residue protein sequence, read N- to C-terminus: Phosphoglycerate kinase (400 aa).

Substrate-binding positions include 24-26 (DFN), arginine 40, 63-66 (HFGR), arginine 121, and arginine 154. Residues lysine 205, glycine 296, glutamate 327, and 356–359 (GGDS) each bind ATP.

As to quaternary structure, monomer.

The protein resides in the cytoplasm. It carries out the reaction (2R)-3-phosphoglycerate + ATP = (2R)-3-phospho-glyceroyl phosphate + ADP. The protein operates within carbohydrate degradation; glycolysis; pyruvate from D-glyceraldehyde 3-phosphate: step 2/5. This Nostoc sp. (strain PCC 7120 / SAG 25.82 / UTEX 2576) protein is Phosphoglycerate kinase.